Reading from the N-terminus, the 200-residue chain is Prolactin (200 aa).

Disulfide bonds link cysteine 4–cysteine 11, cysteine 59–cysteine 175, and cysteine 192–cysteine 200.

The protein belongs to the somatotropin/prolactin family. In terms of tissue distribution, pituitary gland.

It is found in the secreted. This chain is Prolactin (prl), found in Protopterus aethiopicus (Marbled lungfish).